The following is a 558-amino-acid chain: Dihydroxy-acid dehydratase (558 aa).

Cys50 serves as a coordination point for [2Fe-2S] cluster. Asp82 contributes to the Mg(2+) binding site. Cys123 is a binding site for [2Fe-2S] cluster. Mg(2+)-binding residues include Asp124 and Lys125. The residue at position 125 (Lys125) is an N6-carboxylysine. Residue Cys195 participates in [2Fe-2S] cluster binding. Glu447 serves as a coordination point for Mg(2+). The active-site Proton acceptor is Ser472.

It belongs to the IlvD/Edd family. As to quaternary structure, homodimer. Requires [2Fe-2S] cluster as cofactor. Mg(2+) serves as cofactor.

The catalysed reaction is (2R)-2,3-dihydroxy-3-methylbutanoate = 3-methyl-2-oxobutanoate + H2O. It catalyses the reaction (2R,3R)-2,3-dihydroxy-3-methylpentanoate = (S)-3-methyl-2-oxopentanoate + H2O. Its pathway is amino-acid biosynthesis; L-isoleucine biosynthesis; L-isoleucine from 2-oxobutanoate: step 3/4. It participates in amino-acid biosynthesis; L-valine biosynthesis; L-valine from pyruvate: step 3/4. Functions in the biosynthesis of branched-chain amino acids. Catalyzes the dehydration of (2R,3R)-2,3-dihydroxy-3-methylpentanoate (2,3-dihydroxy-3-methylvalerate) into 2-oxo-3-methylpentanoate (2-oxo-3-methylvalerate) and of (2R)-2,3-dihydroxy-3-methylbutanoate (2,3-dihydroxyisovalerate) into 2-oxo-3-methylbutanoate (2-oxoisovalerate), the penultimate precursor to L-isoleucine and L-valine, respectively. The protein is Dihydroxy-acid dehydratase of Saccharolobus islandicus (strain M.16.27) (Sulfolobus islandicus).